Consider the following 80-residue polypeptide: Turripeptide VI/VII-01 (80 aa).

An N-terminal signal peptide occupies residues 1–22; that stretch reads MRLQLILTITLLLTSFMGYRDA. Residues 23–36 constitute a propeptide that is removed on maturation; the sequence is AVIQGKTERSAMKM. 3 cysteine pairs are disulfide-bonded: Cys48-Cys61, Cys50-Cys65, and Cys60-Cys70. Residues 77–80 constitute a propeptide that is removed on maturation; that stretch reads SSAI.

Expressed by the venom duct.

It is found in the secreted. This is Turripeptide VI/VII-01 from Gemmula speciosa (Splendid gem-turris).